The sequence spans 65 residues: Muscarinic toxin-like protein 3 (65 aa).

Disulfide bonds link Cys-3/Cys-24, Cys-17/Cys-41, Cys-45/Cys-57, and Cys-58/Cys-63.

Homodimer; non-covalently linked. Expressed by the venom gland.

The protein localises to the secreted. Its function is as follows. Antagonist of muscle and neuronal nicotinic acetylcholine receptors (nAChR) with highest affinity for neuronal alpha-7/CHRNA7 nAChRs. In Naja kaouthia (Monocled cobra), this protein is Muscarinic toxin-like protein 3.